Reading from the N-terminus, the 136-residue chain is Large ribosomal subunit protein eL27A (136 aa).

It belongs to the eukaryotic ribosomal protein eL27 family. Component of the large ribosomal subunit (LSU). Mature yeast ribosomes consist of a small (40S) and a large (60S) subunit. The 40S small subunit contains 1 molecule of ribosomal RNA (18S rRNA) and at least 33 different proteins. The large 60S subunit contains 3 rRNA molecules (25S, 5.8S and 5S rRNA) and at least 46 different proteins.

It localises to the cytoplasm. The protein resides in the nucleus. Its function is as follows. Component of the ribosome, a large ribonucleoprotein complex responsible for the synthesis of proteins in the cell. The small ribosomal subunit (SSU) binds messenger RNAs (mRNAs) and translates the encoded message by selecting cognate aminoacyl-transfer RNA (tRNA) molecules. The large subunit (LSU) contains the ribosomal catalytic site termed the peptidyl transferase center (PTC), which catalyzes the formation of peptide bonds, thereby polymerizing the amino acids delivered by tRNAs into a polypeptide chain. The nascent polypeptides leave the ribosome through a tunnel in the LSU and interact with protein factors that function in enzymatic processing, targeting, and the membrane insertion of nascent chains at the exit of the ribosomal tunnel. The sequence is that of Large ribosomal subunit protein eL27A (rpl2701) from Schizosaccharomyces pombe (strain 972 / ATCC 24843) (Fission yeast).